Reading from the N-terminus, the 177-residue chain is HVA22-like protein a (177 aa).

3 helical membrane-spanning segments follow: residues 18–38 (VLAGPVVSLVYPLYASVQAIE), 47–67 (QWLTYWVLYSLLTLIELTFAK), and 68–88 (LIEWLPIWSYMKLILTCWLVI).

The protein belongs to the DP1 family. As to expression, predominantly expressed in flower buds and stem.

It localises to the membrane. The polypeptide is HVA22-like protein a (HVA22A) (Arabidopsis thaliana (Mouse-ear cress)).